We begin with the raw amino-acid sequence, 267 residues long: 4-hydroxy-tetrahydrodipicolinate reductase (267 aa).

NAD(+) contacts are provided by residues Gly8–Met13 and Glu34. Arg35 provides a ligand contact to NADP(+). Residues Gly98–Thr100 and Ala122–Met125 contribute to the NAD(+) site. The active-site Proton donor/acceptor is His155. A (S)-2,3,4,5-tetrahydrodipicolinate-binding site is contributed by His156. The Proton donor role is filled by Lys159. Residue Gly165–Thr166 participates in (S)-2,3,4,5-tetrahydrodipicolinate binding.

The protein belongs to the DapB family.

Its subcellular location is the cytoplasm. It carries out the reaction (S)-2,3,4,5-tetrahydrodipicolinate + NAD(+) + H2O = (2S,4S)-4-hydroxy-2,3,4,5-tetrahydrodipicolinate + NADH + H(+). The catalysed reaction is (S)-2,3,4,5-tetrahydrodipicolinate + NADP(+) + H2O = (2S,4S)-4-hydroxy-2,3,4,5-tetrahydrodipicolinate + NADPH + H(+). It functions in the pathway amino-acid biosynthesis; L-lysine biosynthesis via DAP pathway; (S)-tetrahydrodipicolinate from L-aspartate: step 4/4. Catalyzes the conversion of 4-hydroxy-tetrahydrodipicolinate (HTPA) to tetrahydrodipicolinate. This Geotalea daltonii (strain DSM 22248 / JCM 15807 / FRC-32) (Geobacter daltonii) protein is 4-hydroxy-tetrahydrodipicolinate reductase.